The primary structure comprises 288 residues: Elongation factor Ts (288 aa).

Residues 80 to 83 (TDFL) form an involved in Mg(2+) ion dislocation from EF-Tu region.

Belongs to the EF-Ts family.

It is found in the cytoplasm. Its function is as follows. Associates with the EF-Tu.GDP complex and induces the exchange of GDP to GTP. It remains bound to the aminoacyl-tRNA.EF-Tu.GTP complex up to the GTP hydrolysis stage on the ribosome. The polypeptide is Elongation factor Ts (Pseudomonas fluorescens (strain ATCC BAA-477 / NRRL B-23932 / Pf-5)).